We begin with the raw amino-acid sequence, 212 residues long: Thymidylate kinase (212 aa).

11 to 18 (GPEGAGKT) lines the ATP pocket.

This sequence belongs to the thymidylate kinase family.

The enzyme catalyses dTMP + ATP = dTDP + ADP. Phosphorylation of dTMP to form dTDP in both de novo and salvage pathways of dTTP synthesis. The sequence is that of Thymidylate kinase from Streptococcus pneumoniae (strain Hungary19A-6).